The following is a 296-amino-acid chain: Ribosomal RNA small subunit methyltransferase A (296 aa).

Residues N31, L33, G58, E79, D111, and N136 each coordinate S-adenosyl-L-methionine.

This sequence belongs to the class I-like SAM-binding methyltransferase superfamily. rRNA adenine N(6)-methyltransferase family. RsmA subfamily.

It is found in the cytoplasm. It catalyses the reaction adenosine(1518)/adenosine(1519) in 16S rRNA + 4 S-adenosyl-L-methionine = N(6)-dimethyladenosine(1518)/N(6)-dimethyladenosine(1519) in 16S rRNA + 4 S-adenosyl-L-homocysteine + 4 H(+). Its function is as follows. Specifically dimethylates two adjacent adenosines (A1518 and A1519) in the loop of a conserved hairpin near the 3'-end of 16S rRNA in the 30S particle. May play a critical role in biogenesis of 30S subunits. The sequence is that of Ribosomal RNA small subunit methyltransferase A from Lactobacillus delbrueckii subsp. bulgaricus (strain ATCC BAA-365 / Lb-18).